The chain runs to 371 residues: MSL complex subunit 3B (371 aa).

2 disordered regions span residues 1 to 44 and 160 to 229; these read MATL…READ and EERA…SPQA. The segment covering 8 to 44 has biased composition (basic and acidic residues); sequence PKDDGEGKDEGGSDRGDGDPKPKGKKEVEAHTRREAD. Positions 44–367 constitute an MRG domain; it reads DERAVRIPIP…CEAHYSSKNP (324 aa). A compositionally biased stretch (basic residues) spans 206–216; it reads APRRSTRHSTH.

Its subcellular location is the nucleus. Probable non-catalytic component of the MSL histone acetyltransferase complex, a multiprotein complex that mediates the majority of histone H4 acetylation at 'Lys-16' (H4K16ac), an epigenetic mark that prevents chromatin compaction. This Rattus norvegicus (Rat) protein is MSL complex subunit 3B.